The sequence spans 287 residues: ATP synthase gamma chain (287 aa).

The protein belongs to the ATPase gamma chain family. F-type ATPases have 2 components, CF(1) - the catalytic core - and CF(0) - the membrane proton channel. CF(1) has five subunits: alpha(3), beta(3), gamma(1), delta(1), epsilon(1). CF(0) has three main subunits: a, b and c.

The protein resides in the cell inner membrane. In terms of biological role, produces ATP from ADP in the presence of a proton gradient across the membrane. The gamma chain is believed to be important in regulating ATPase activity and the flow of protons through the CF(0) complex. In Escherichia fergusonii (strain ATCC 35469 / DSM 13698 / CCUG 18766 / IAM 14443 / JCM 21226 / LMG 7866 / NBRC 102419 / NCTC 12128 / CDC 0568-73), this protein is ATP synthase gamma chain.